A 413-amino-acid chain; its full sequence is Aminopeptidase PepS (413 aa).

Residues Glu-253, Glu-319, Glu-343, His-348, His-381, and Asp-383 each coordinate a divalent metal cation.

The protein belongs to the peptidase M29 family. As to quaternary structure, monomer. The cofactor is Co(2+). Requires Zn(2+) as cofactor. Mg(2+) is required as a cofactor.

Exhibits a high specificity towards peptides possessing arginine or aromatic amino acids at the N-terminus. Could be involved both in bacterial growth by supplying amino acids. This is Aminopeptidase PepS (pepS) from Streptococcus thermophilus.